Reading from the N-terminus, the 182-residue chain is Thymidine kinase (182 aa).

8-15 (GPMFSGKT) lines the ATP pocket. Residue E85 is the Proton acceptor of the active site. F117 is a substrate binding site. C142 and C145 together coordinate Zn(2+). Residue 161–165 (IIEIG) coordinates substrate. C174 and C177 together coordinate Zn(2+).

Belongs to the thymidine kinase family.

The catalysed reaction is thymidine + ATP = dTMP + ADP + H(+). The sequence is that of Thymidine kinase (TK) from Amsacta moorei entomopoxvirus (AmEPV).